Consider the following 101-residue polypeptide: Small ribosomal subunit protein uS14 (101 aa).

Belongs to the universal ribosomal protein uS14 family. In terms of assembly, part of the 30S ribosomal subunit. Contacts proteins S3 and S10.

Binds 16S rRNA, required for the assembly of 30S particles and may also be responsible for determining the conformation of the 16S rRNA at the A site. This chain is Small ribosomal subunit protein uS14, found in Burkholderia vietnamiensis (strain G4 / LMG 22486) (Burkholderia cepacia (strain R1808)).